Reading from the N-terminus, the 516-residue chain is Histone H4 transcription factor (516 aa).

3 C2H2-type zinc fingers span residues 15–39, 127–151, and 167–191; these read LQCE…VTQH, FLCL…VEAH, and VLCG…LRSH. A C2H2-type 4; degenerate zinc finger spans residues 197-219; it reads VACPTCGGMFANNTKFLDHIRRQ. C2H2-type zinc fingers lie at residues 227–249, 253–276, 282–304, 310–335, and 343–366; these read FQCS…MRNH, YKCP…RFRH, FKCD…LDTH, YSCD…RKVH, and YRCH…RKKH. The segment at 371-516 is interaction with NPAT; it reads PSGHPRFRYK…AAEEPEVQMV (146 aa). A required for activation of histone H4 transcription and contributes to DNA-binding region spans residues 372–405; the sequence is SGHPRFRYKEHEDGYMRLQLVRYESVELTQQLLR. Disordered stretches follow at residues 429–456 and 486–516; these read TVPG…PASQ and PGEP…VQMV. Positions 436–445 are enriched in acidic residues; that stretch reads PQEEAEEEGG.

In terms of assembly, binds MBD2 and a histone deacetylase complex. Interacts with NPAT. In terms of processing, ubiquitinated. Ubiquitination may lead to proteasome-mediated degradation.

Its subcellular location is the nucleus. Transcriptional repressor that binds to the consensus sequence 5'-CGGACGTT-3' and to the RB1 promoter. Transcriptional activator that promotes histone H4 gene transcription at the G1/S phase transition in conjunction with NPAT. Also activates transcription of the ATM and PRKDC genes. Autoregulates its expression by associating with its own promoter. In Bos taurus (Bovine), this protein is Histone H4 transcription factor (HINFP).